Reading from the N-terminus, the 200-residue chain is Probable molybdenum cofactor guanylyltransferase (200 aa).

Residues 9–11, Lys-21, Asp-69, and Asp-100 contribute to the GTP site; that span reads LAG. Asp-100 is a Mg(2+) binding site.

It belongs to the MobA family. Mg(2+) is required as a cofactor.

The protein localises to the cytoplasm. It catalyses the reaction Mo-molybdopterin + GTP + H(+) = Mo-molybdopterin guanine dinucleotide + diphosphate. In terms of biological role, transfers a GMP moiety from GTP to Mo-molybdopterin (Mo-MPT) cofactor (Moco or molybdenum cofactor) to form Mo-molybdopterin guanine dinucleotide (Mo-MGD) cofactor. In Bacillus mycoides (strain KBAB4) (Bacillus weihenstephanensis), this protein is Probable molybdenum cofactor guanylyltransferase.